The chain runs to 82 residues: Large ribosomal subunit protein uL23 (82 aa).

It belongs to the universal ribosomal protein uL23 family. Part of the 50S ribosomal subunit. Contacts protein L29.

Binds to 23S rRNA. One of the proteins that surrounds the polypeptide exit tunnel on the outside of the ribosome. The sequence is that of Large ribosomal subunit protein uL23 from Picrophilus torridus (strain ATCC 700027 / DSM 9790 / JCM 10055 / NBRC 100828 / KAW 2/3).